The chain runs to 336 residues: tRNA N6-adenosine threonylcarbamoyltransferase (336 aa).

Fe cation contacts are provided by His-111, His-115, and Tyr-132. Residues 132–136 (YLSGG), Asp-164, Asp-185, and Ser-264 contribute to the substrate site. Residue Asp-292 coordinates Fe cation.

It belongs to the KAE1 / TsaD family. Fe(2+) is required as a cofactor.

The protein resides in the cytoplasm. The enzyme catalyses L-threonylcarbamoyladenylate + adenosine(37) in tRNA = N(6)-L-threonylcarbamoyladenosine(37) in tRNA + AMP + H(+). Its function is as follows. Required for the formation of a threonylcarbamoyl group on adenosine at position 37 (t(6)A37) in tRNAs that read codons beginning with adenine. Is probably involved in the transfer of the threonylcarbamoyl moiety of threonylcarbamoyl-AMP (TC-AMP) to the N6 group of A37. In Sulfurisphaera tokodaii (strain DSM 16993 / JCM 10545 / NBRC 100140 / 7) (Sulfolobus tokodaii), this protein is tRNA N6-adenosine threonylcarbamoyltransferase.